The following is a 139-amino-acid chain: 10 kDa chaperonin 2, chloroplastic (139 aa).

The N-terminal 39 residues, 1-39 (MASTFVCSLPNPFFAFPVKATTPSTANHTLLGSRRGCLR), are a transit peptide targeting the chloroplast. The interval 51-138 (KVVPQADRVL…CKESDLLALV (88 aa)) is cpn-10 domain.

The protein belongs to the GroES chaperonin family. In terms of tissue distribution, expressed in leaves and stems. Expressed at low levels in germinating seeds, seedlings, rosettes leaves, flowers and siliques.

The protein localises to the plastid. The protein resides in the chloroplast stroma. In terms of biological role, functions as a co-chaperone for protein folding in chloroplasts. The sequence is that of 10 kDa chaperonin 2, chloroplastic from Arabidopsis thaliana (Mouse-ear cress).